The sequence spans 1011 residues: Histone deacetylase 9 (1011 aa).

Ser-22 carries the phosphoserine modification. The interaction with CTBP1 stretch occupies residues 23–27 (PLDLR). Disordered stretches follow at residues 110–139 (RQEQEVERHRREQQLPPLRGKDRGRERAVA), 183–249 (TSLD…KDGN), and 262–304 (TESS…EQMV). An interaction with MEF2 region spans residues 136–154 (RAVASTEVKQKLQEFLLSK). The interval 175–343 (LWYTAAHHTS…LPAVPSQLNA (169 aa)) is interaction with MAPK10. Over residues 185–199 (LDQSSPPLSGTSPSY) the composition is skewed to polar residues. A compositionally biased stretch (basic and acidic residues) spans 208–219 (DAKDDFPLRKTA). The segment at 218–261 (TASEPNLKVRSRLKQKVAERRSSPLLRRKDGNVVTSFKKRMFEV) is interaction with ETV6. A phosphoserine mark is found at Ser-220 and Ser-240. Basic and acidic residues predominate over residues 233–248 (KVAERRSSPLLRRKDG). Residues 262–285 (TESSVSSSSPGSGPSSPNNGPTGS) show a composition bias toward low complexity. Position 451 is a phosphoserine (Ser-451). Positions 494-536 (QLKQPGSHLEEAEEELQGDQAMQEDRAPSSGNSTRSDSSACVD) are disordered. Over residues 522-532 (SSGNSTRSDSS) the composition is skewed to polar residues. Phosphoserine is present on Ser-554. Positions 631 to 978 (SATGIAYDPL…VNALLGNELE (348 aa)) are histone deacetylase. Zn(2+) is bound by residues Cys-646, Cys-648, His-654, and Cys-731. Residue His-783 is part of the active site.

The protein belongs to the histone deacetylase family. HD type 2 subfamily. In terms of assembly, homodimer. Interacts with CTBP1. The phosphorylated form interacts with 14-3-3. Interacts with HDAC1 and HDAC3, and probably with HDAC4 and HDAC5. Interacts with MEF2, MAPK10, ETV6, NCOR1 and BCL6. Interacts with FOXP3 in the absence of T-cell stimulation. In terms of processing, phosphorylated on Ser-220 and Ser-450; which promotes 14-3-3-binding, impairs interaction with MEF2, and antagonizes antimyogenic activity. Phosphorylated on Ser-240; which impairs nuclear accumulation. Isoform 7 is phosphorylated on Tyr-1010. Phosphorylated by the PKC kinases PKN1 and PKN2, impairing nuclear import. Post-translationally, sumoylated. As to expression, broadly expressed, with highest levels in brain, heart, muscle and testis. Isoform 3 is present in human bladder carcinoma cells (at protein level).

The protein resides in the nucleus. The catalysed reaction is N(6)-acetyl-L-lysyl-[histone] + H2O = L-lysyl-[histone] + acetate. With respect to regulation, inhibited by Trichostatin A (TSA) and suberoylanilide hydroxamic acid. In terms of biological role, responsible for the deacetylation of lysine residues on the N-terminal part of the core histones (H2A, H2B, H3 and H4). Histone deacetylation gives a tag for epigenetic repression and plays an important role in transcriptional regulation, cell cycle progression and developmental events. Represses MEF2-dependent transcription. Isoform 3 lacks active site residues and therefore is catalytically inactive. Represses MEF2-dependent transcription by recruiting HDAC1 and/or HDAC3. Seems to inhibit skeletal myogenesis and to be involved in heart development. Protects neurons from apoptosis, both by inhibiting JUN phosphorylation by MAPK10 and by repressing JUN transcription via HDAC1 recruitment to JUN promoter. This is Histone deacetylase 9 (HDAC9) from Homo sapiens (Human).